Reading from the N-terminus, the 441-residue chain is MQGRVRGSGEDRISILPEPLLCHILSFLRTKDSVRTSVLSSRWRDLWLWVPRLDLDKSDFSDDNPSASFVDKFLNFRGESYLRGFKLNTDHDVYDISTLDACLMRLDKCKIQHFEIENCFGFCILLMPLIIPMCHTLVSLKLSFVILSKFGSLSLPCLEIMHFEKVIFPSDKSAEVLIACSPVLRDLRISQSGDDAVEVLRVCSASLKSFTLKRTDHDYVGNGEYTVVIDTPRLEYLNLKDYQCQGFKIVSMSEYVRVHVDVVFEVIGGTVLSKRNIICDFLSCVSNVRYMTISRRSLEFIYRHLELKPRFKFHDLARLRATMFSNSSPEMLPVILETCPNLKHLTLELVHDSLVTEGTSGLLTVLPRCLISSLASVDIESPITDKATELKLVSYLLENSTTLKKLVLRLNQSCRDKYEPGLLKQVLQSPRCSSLCQLVIL.

Positions 10 to 56 (EDRISILPEPLLCHILSFLRTKDSVRTSVLSSRWRDLWLWVPRLDLD) constitute an F-box domain. The 45-residue stretch at 366–410 (LPRCLISSLASVDIESPITDKATELKLVSYLLENSTTLKKLVLRL) folds into the FBD domain.

The chain is FBD-associated F-box protein At5g18780 from Arabidopsis thaliana (Mouse-ear cress).